Reading from the N-terminus, the 557-residue chain is Protein NRT1/ PTR FAMILY 2.6 (557 aa).

12 helical membrane passes run Ile26–Leu46, Ile67–Asp87, Phe89–Leu109, Asn136–Leu156, Phe177–Val197, Ile203–Phe223, Ile318–Leu338, Ile356–Asn376, Val398–Lys418, Val439–Gly459, Ser478–Ile498, and Tyr518–Phe538.

It belongs to the major facilitator superfamily. Proton-dependent oligopeptide transporter (POT/PTR) (TC 2.A.17) family. Expressed in roots.

Its subcellular location is the membrane. Transporter involved in a passive nitrate efflux. The polypeptide is Protein NRT1/ PTR FAMILY 2.6 (NPF2.6) (Arabidopsis thaliana (Mouse-ear cress)).